Consider the following 367-residue polypeptide: Cyclin-D5-1 (367 aa).

The disordered stretch occupies residues 307 to 333 (QPTSPASKSTTTTTGKRSSSSSCSEST).

Belongs to the cyclin family. Cyclin D subfamily.

This chain is Cyclin-D5-1 (CYCD5-1), found in Oryza sativa subsp. japonica (Rice).